Here is a 105-residue protein sequence, read N- to C-terminus: Thiosulfate sulfurtransferase GlpE (105 aa).

Positions 15-103 constitute a Rhodanese domain; that stretch reads MQQGAILVDI…WCRAELPIDT (89 aa). Cys-63 acts as the Cysteine persulfide intermediate in catalysis.

Belongs to the GlpE family.

The protein localises to the cytoplasm. It carries out the reaction thiosulfate + hydrogen cyanide = thiocyanate + sulfite + 2 H(+). The catalysed reaction is thiosulfate + [thioredoxin]-dithiol = [thioredoxin]-disulfide + hydrogen sulfide + sulfite + 2 H(+). Functionally, transferase that catalyzes the transfer of sulfur from thiosulfate to thiophilic acceptors such as cyanide or dithiols. May function in a CysM-independent thiosulfate assimilation pathway by catalyzing the conversion of thiosulfate to sulfite, which can then be used for L-cysteine biosynthesis. This Haemophilus influenzae (strain 86-028NP) protein is Thiosulfate sulfurtransferase GlpE.